The following is a 415-amino-acid chain: Phosphoglycerate kinase (415 aa).

Residues valine 22, aspartate 23, phenylalanine 24, asparagine 25, glutamine 37, arginine 38, serine 61, histidine 62, glycine 64, arginine 65, arginine 121, histidine 168, and arginine 169 each contribute to the (2R)-3-phosphoglycerate site. Glycine 212 contributes to the ADP binding site. CDP is bound at residue glycine 212. Residues alanine 213 and lysine 214 each contribute to the AMP site. Alanine 213 contacts ATP. Alanine 213 contributes to the Mg(2+) binding site. Residues alanine 216 and aspartate 217 each contribute to the Mg(2+) site. CDP is bound at residue aspartate 217. Lysine 218 contacts AMP. An ATP-binding site is contributed by lysine 218. An ADP-binding site is contributed by glycine 236. Glycine 236 lines the CDP pocket. AMP-binding residues include glycine 237 and glycine 311. Residues glycine 237 and glycine 311 each contribute to the ATP site. Residues glycine 336 and phenylalanine 341 each coordinate CDP. Phenylalanine 341 lines the ADP pocket. Glutamate 342 serves as a coordination point for AMP. ATP contacts are provided by glutamate 342, aspartate 373, and threonine 374. Aspartate 373 contacts Mg(2+).

This sequence belongs to the phosphoglycerate kinase family. Monomer. Mg(2+) is required as a cofactor.

It is found in the cytoplasm. The catalysed reaction is (2R)-3-phosphoglycerate + ATP = (2R)-3-phospho-glyceroyl phosphate + ADP. It functions in the pathway carbohydrate degradation; glycolysis; pyruvate from D-glyceraldehyde 3-phosphate: step 2/5. Enzyme of the glycolytic pathway. Glycolysis is essential in glial cells but not in neurons; neurons rely on the citric acid cycle for their energy needs, and on lactate and alanine secreted into the hemolymph by glial cells to fuel it. The polypeptide is Phosphoglycerate kinase (Drosophila melanogaster (Fruit fly)).